The chain runs to 169 residues: MRDEDLVVMGFVRGAFGIKGWVKIHADTEYADGLFDYPTWWLGKNGSWKPYAFENGAVQPKALAAKLEGVDDRDAAEALRGTQIAIPRSELPEAGDGEYYWADLIGLSVVNQQGETLGKVDSLLETGANDVLVVKGGDGQQRLIPFVDQYVLEVVPAEGRILVDWGLDY.

In terms of domain architecture, PRC barrel spans 96–169 (DGEYYWADLI…RILVDWGLDY (74 aa)).

The protein belongs to the RimM family. As to quaternary structure, binds ribosomal protein uS19.

The protein localises to the cytoplasm. An accessory protein needed during the final step in the assembly of 30S ribosomal subunit, possibly for assembly of the head region. Essential for efficient processing of 16S rRNA. May be needed both before and after RbfA during the maturation of 16S rRNA. It has affinity for free ribosomal 30S subunits but not for 70S ribosomes. The polypeptide is Ribosome maturation factor RimM (Chromobacterium violaceum (strain ATCC 12472 / DSM 30191 / JCM 1249 / CCUG 213 / NBRC 12614 / NCIMB 9131 / NCTC 9757 / MK)).